The sequence spans 1060 residues: Protein transport protein Sec16B (1060 aa).

The interval 1–86 is disordered; it reads MELWAPQRLP…GDWHQPVSGV (86 aa). A required for endoplasmic reticulum localization region spans residues 34 to 224; the sequence is RPVPHSWHNG…PSLASESNLL (191 aa). Residues 41–50 are compositionally biased toward basic and acidic residues; that stretch reads HNGERFHQWQ. Over residues 51 to 60 the composition is skewed to polar residues; sequence DNRGSPQPQQ. A phosphoserine mark is found at Ser55, Ser143, Ser167, Ser188, and Ser191. Disordered regions lie at residues 163–236, 245–264, 711–733, 770–796, and 834–1060; these read ENQH…SSSY, APER…QADV, KVAG…GGTT, PSPQ…GTPR, and PGEN…TQPC. 2 stretches are compositionally biased toward polar residues: residues 165-195 and 213-222; these read QHSP…NSGQ and NKPSLASESN. Residues 223–236 are compositionally biased toward low complexity; it reads LLQQRESGLSSSSY. Ser254 and Ser258 each carry phosphoserine. The tract at residues 271–713 is central conserved domain (CCD); required for localization to endoplasmic reticulum exit sites; sequence APMKFYIPHV…LRRQLEQKVA (443 aa). Over residues 837 to 847 the composition is skewed to polar residues; it reads NTVSQETSQPP. Position 858 is a phosphothreonine (Thr858). Residues Ser868, Ser871, Ser874, Ser882, and Ser883 each carry the phosphoserine modification. Composition is skewed to basic and acidic residues over residues 875–890 and 899–908; these read AKED…DKNS and KLGDGKEHTK. Over residues 909-918 the composition is skewed to low complexity; it reads SSGFGWFSWF. A compositionally biased stretch (acidic residues) spans 930–941; it reads GDEDSSDSPDSE. Over residues 991 to 1001 the composition is skewed to gly residues; that stretch reads AAAGAGVGGLS. A compositionally biased stretch (polar residues) spans 1031–1046; it reads NPSQVPQLPTATSLNR.

Belongs to the SEC16 family. In terms of assembly, SEC16A and SEC16B are each present in multiple copies in a heteromeric complex. Interacts with TFG. Interacts with SEC13. In terms of tissue distribution, ubiquitous.

It localises to the endoplasmic reticulum membrane. It is found in the golgi apparatus membrane. Its function is as follows. Plays a role in the organization of the endoplasmic reticulum exit sites (ERES), also known as transitional endoplasmic reticulum (tER). Required for secretory cargo traffic from the endoplasmic reticulum to the Golgi apparatus. Involved in peroxisome biogenesis. Regulates the transport of peroxisomal biogenesis factors PEX3 and PEX16 from the ER to peroxisomes. This is Protein transport protein Sec16B (SEC16B) from Homo sapiens (Human).